The primary structure comprises 334 residues: Small ribosomal subunit protein RACK1z (334 aa).

7 WD repeats span residues 16–47 (GHNDVVTAIATPIDNSPFIVSSSRDKSLLVWD), 73–103 (GHSHFVQDVVLSSDGQFALSGSWDGELRLWD), 115–145 (GHDKDVLSVAFSVDNRQIVSASRDRTIKLWN), 163–195 (GHNGWVSCVRFSPNTFQPTIVSGSWDRTVKVWN), 207–237 (GHGGYVNAVAVSPDGSLCASGGKDGVTLLWD), 248–277 (DAGSIIHSLCFSPNRYWLCAATQDSIKIWD), and 296–326 (NQMLYCTSLNWSADGSTLYAGYTDGTIRIYK).

Belongs to the WD repeat G protein beta family. Ribosomal protein RACK1 subfamily. In terms of assembly, interacts with RAC1, RAC3, RAC6, RAR1, SGT1 and RBOHB. Homodimer and heterodimer with RACK1B. Widely expressed.

The protein localises to the cytoplasm. It localises to the cell membrane. In terms of biological role, component of the RACK1 regulatory proteins that functions in innate immunity by interacting with multiple proteins in the RAC1 immune complex. Acts as a positive regulator of reactive oxygen species (ROS) production and is required for resistance against rice blast (M.grisea) infection. In Oryza sativa subsp. japonica (Rice), this protein is Small ribosomal subunit protein RACK1z (RACK1A).